A 339-amino-acid polypeptide reads, in one-letter code: Transposase for insertion sequence element IS1086 (339 aa).

The Integrase catalytic domain occupies 176-329 (DRLMPGHWEG…SPLQVLAQVL (154 aa)).

Belongs to the transposase IS30 family.

Required for the transposition of the insertion element. In Cupriavidus metallidurans (strain ATCC 43123 / DSM 2839 / NBRC 102507 / CH34) (Ralstonia metallidurans), this protein is Transposase for insertion sequence element IS1086 (IS1086).